The primary structure comprises 321 residues: Protein translocase subunit SecF (321 aa).

The next 6 helical transmembrane spans lie at 23–43, 158–178, 189–209, 217–237, 258–280, and 290–312; these read VWLI…FSWT, LQTT…YISI, LLAL…LGII, LFAV…VVVF, FAVS…PLIA, and YWFA…ALVP.

It belongs to the SecD/SecF family. SecF subfamily. As to quaternary structure, forms a complex with SecD. Part of the essential Sec protein translocation apparatus which comprises SecA, SecYEG and auxiliary proteins SecDF. Other proteins may also be involved.

It localises to the cell inner membrane. In terms of biological role, part of the Sec protein translocase complex. Interacts with the SecYEG preprotein conducting channel. SecDF uses the proton motive force (PMF) to complete protein translocation after the ATP-dependent function of SecA. Probably participates in protein translocation into and across both the cytoplasmic and thylakoid membranes in cyanobacterial cells. This is Protein translocase subunit SecF from Prochlorococcus marinus (strain SARG / CCMP1375 / SS120).